A 153-amino-acid chain; its full sequence is SsrA-binding protein (153 aa).

The protein belongs to the SmpB family.

Its subcellular location is the cytoplasm. In terms of biological role, required for rescue of stalled ribosomes mediated by trans-translation. Binds to transfer-messenger RNA (tmRNA), required for stable association of tmRNA with ribosomes. tmRNA and SmpB together mimic tRNA shape, replacing the anticodon stem-loop with SmpB. tmRNA is encoded by the ssrA gene; the 2 termini fold to resemble tRNA(Ala) and it encodes a 'tag peptide', a short internal open reading frame. During trans-translation Ala-aminoacylated tmRNA acts like a tRNA, entering the A-site of stalled ribosomes, displacing the stalled mRNA. The ribosome then switches to translate the ORF on the tmRNA; the nascent peptide is terminated with the 'tag peptide' encoded by the tmRNA and targeted for degradation. The ribosome is freed to recommence translation, which seems to be the essential function of trans-translation. The sequence is that of SsrA-binding protein from Paramagnetospirillum magneticum (strain ATCC 700264 / AMB-1) (Magnetospirillum magneticum).